The following is a 128-amino-acid chain: Insulin-like growth factor 2 (128 aa).

The first 24 residues, 1-24 (MGISMGKSMLVLLTFLAFASCCIA), serve as a signal peptide directing secretion. The segment at 25–52 (AYRPSETLCGGELVDTLQFVCGDRGFYF) is b. Intrachain disulfides connect Cys-33-Cys-71, Cys-45-Cys-84, and Cys-70-Cys-75. The c stretch occupies residues 53–64 (SRPASRVSRRSR). The interval 65 to 85 (GIVEECCFRSCDLALLETYCA) is a. Positions 86–91 (TPAKSE) are d. The propeptide at 92-128 (RDVSASLAVLPDNFPRYPVGKFFQYDTWRQSTQRLRR) is e peptide.

It belongs to the insulin family. In terms of assembly, interacts with MYORG; this interaction is required for IGF2 secretion. Interacts with integrins ITGAV:ITGB3 and ITGA6:ITGB4; integrin-binding is required for IGF2 signaling. Post-translationally, proteolytically processed by PCSK4, proIGF2 is cleaved at Arg-128 and Arg-92 to generate big-IGF2 and mature IGF2.

It localises to the secreted. The insulin-like growth factors possess growth-promoting activity. Major fetal growth hormone in mammals. Plays a key role in regulating fetoplacental development. IGF2 is influenced by placental lactogen. Also involved in tissue differentiation. In adults, involved in glucose metabolism in adipose tissue, skeletal muscle and liver. Acts as a ligand for integrin which is required for IGF2 signaling. Positively regulates myogenic transcription factor MYOD1 function by facilitating the recruitment of transcriptional coactivators, thereby controlling muscle terminal differentiation. Inhibits myoblast differentiation and metabolism via increasing the mitochondrial respiration rate. In terms of biological role, preptin undergoes glucose-mediated co-secretion with insulin, and acts as a physiological amplifier of glucose-mediated insulin secretion. Exhibits osteogenic properties by increasing osteoblast mitogenic activity through phosphoactivation of MAPK1 and MAPK3. The protein is Insulin-like growth factor 2 of Cavia porcellus (Guinea pig).